The chain runs to 96 residues: UPF0235 protein ECA3630 (96 aa).

Belongs to the UPF0235 family.

In Pectobacterium atrosepticum (strain SCRI 1043 / ATCC BAA-672) (Erwinia carotovora subsp. atroseptica), this protein is UPF0235 protein ECA3630.